A 411-amino-acid chain; its full sequence is Lissencephaly-1 homolog (411 aa).

Positions 9–41 (QREELNQAIADYLGSNGYGDSLETFRKEADVST) constitute a LisH domain. Positions 56–83 (TSVIRLQKKVMELEAKLTEAEKEVIEGA) form a coiled coil. WD repeat units follow at residues 106-147 (GHRA…RSLK), 148-187 (GHTD…ECVK), 191-230 (GHDH…CVKT), 233-272 (GHRE…CKVE), 275-334 (DHEH…CLLT), 337-376 (GHDN…CMKT), and 379-411 (AHQH…WECR).

The protein belongs to the WD repeat LIS1/nudF family.

The protein resides in the cytoplasm. The protein localises to the cytoskeleton. Its subcellular location is the microtubule organizing center. It localises to the centrosome. Its function is as follows. Positively regulates the activity of the minus-end directed microtubule motor protein dynein. May enhance dynein-mediated microtubule sliding by targeting dynein to the microtubule plus end. Required for several dynein- and microtubule-dependent processes. This is Lissencephaly-1 homolog from Drosophila persimilis (Fruit fly).